The chain runs to 186 residues: MDKEHLKKNLQEKMEKALKVLDHELKGLRTSRASVNLLDSVTVEAYGSKMPLSQVASLSTPDARTINVQVWDKSMVSSVEKGITIANLGLTPATDGQLIRLPIPALTEERRTELVKLAHKYGEDTKISLRNIRRDGNEVLKKLEKDNVIAKDEHHSLSEQVQKLTDDYSSKVDSVIKQKEQEIMTV.

It belongs to the RRF family.

The protein resides in the cytoplasm. Its function is as follows. Responsible for the release of ribosomes from messenger RNA at the termination of protein biosynthesis. May increase the efficiency of translation by recycling ribosomes from one round of translation to another. In Rickettsia rickettsii (strain Iowa), this protein is Ribosome-recycling factor.